The chain runs to 384 residues: GDSL esterase/lipase At1g71691 (384 aa).

An N-terminal signal peptide occupies residues Met1–Gly27. Catalysis depends on Ser62, which acts as the Nucleophile. Residues Asp348 and His351 contribute to the active site.

It belongs to the 'GDSL' lipolytic enzyme family.

It is found in the secreted. The sequence is that of GDSL esterase/lipase At1g71691 from Arabidopsis thaliana (Mouse-ear cress).